Consider the following 191-residue polypeptide: MHNFTDMRDENSHDEIWLVEHYPVFTQGQAGKAEHILMPGDIPVVQSDRGGQVTYHGPGQQVMYVLLNLKRRKLGVRDLVTLLEQTVVNTLAEIGIEAHPRADAPGVYVGEKKICSLGLRIRRGCSFHGLALNVNMDLSPFLRINPCGYAGMEMAKITQWKEDATTDNIAPRLLANILALLNNPPYEYIAA.

The BPL/LPL catalytic domain occupies 10–185 (ENSHDEIWLV…NILALLNNPP (176 aa)). Substrate is bound by residues 49–56 (RGGQVTYH), 116–118 (SLG), and 129–131 (GLA). The active-site Acyl-thioester intermediate is Cys147.

The protein belongs to the LipB family.

It is found in the cytoplasm. The catalysed reaction is octanoyl-[ACP] + L-lysyl-[protein] = N(6)-octanoyl-L-lysyl-[protein] + holo-[ACP] + H(+). It participates in protein modification; protein lipoylation via endogenous pathway; protein N(6)-(lipoyl)lysine from octanoyl-[acyl-carrier-protein]: step 1/2. Catalyzes the transfer of endogenously produced octanoic acid from octanoyl-acyl-carrier-protein onto the lipoyl domains of lipoate-dependent enzymes. Lipoyl-ACP can also act as a substrate although octanoyl-ACP is likely to be the physiological substrate. The protein is Octanoyltransferase of Salmonella choleraesuis (strain SC-B67).